A 277-amino-acid chain; its full sequence is Small ribosomal subunit protein uS2 (277 aa).

The disordered stretch occupies residues Gly226–Ala277. Residues Ala239–Val257 are compositionally biased toward low complexity.

This sequence belongs to the universal ribosomal protein uS2 family.

The protein is Small ribosomal subunit protein uS2 of Sphingopyxis alaskensis (strain DSM 13593 / LMG 18877 / RB2256) (Sphingomonas alaskensis).